The primary structure comprises 592 residues: MRSHYCGQLNETLVDEEVALCGWVHRRRDHGGVIFLDLRDRDGIAQVVVDPDTPEAFANADRARNEFVLRIRGRIRLRPEGTQNAHMPTGMIEVLAKDVEVLNTAATPPFQLDEHGKVGEEIRLKHRYIDLRRPEMIDKLRLRSRITHSVRAYLEGQGFLDIETPILTRATPEGARDYLVPSRTHAGEFFALPQSPQLFKQLLMVSGFDRYYQIAKCFRDEDLRADRQPEFTQIDLEASFVEESDIMSLTEDMIRRLFQDVLDVELPAFPKMPYSEAMNRYGSDKPDLRIPLELVDVDDLMQGVDFKVFSGPAKADDGRVAALKVTGGATLSRKEIDAYTDFVNIYGAKGLAWIKVNERAKGIQGLQSPIVKFMEDIIESLLDRVGAEDGDIIFFGADKARIVNEALGALRVKLGEDLDLYTQAWAPLWVVDFPMFEADDNGRLAALHHPFTAPSCTPEAFKADPANALSRAYDMVLNGTELGGGSIRIHDQTMQRAVFEVLGIGEEEADEKFGFLLDALKFGAPPHGGLAFGLDRLVMLMSGARTIREVIAFPKTQSAACLMTDAPGEVSAEQLKELNIRLRQKAQNNGDV.

Glutamate 173 provides a ligand contact to L-aspartate. The interval 197-200 is aspartate; the sequence is QLFK. Arginine 219 is a binding site for L-aspartate. Residues 219-221 and glutamine 228 each bind ATP; that span reads RDE. Histidine 448 is a binding site for L-aspartate. Glutamate 481 provides a ligand contact to ATP. Position 488 (arginine 488) interacts with L-aspartate. ATP is bound at residue 533 to 536; that stretch reads GLDR.

It belongs to the class-II aminoacyl-tRNA synthetase family. Type 1 subfamily. Homodimer.

The protein resides in the cytoplasm. The enzyme catalyses tRNA(Asx) + L-aspartate + ATP = L-aspartyl-tRNA(Asx) + AMP + diphosphate. Aspartyl-tRNA synthetase with relaxed tRNA specificity since it is able to aspartylate not only its cognate tRNA(Asp) but also tRNA(Asn). Reaction proceeds in two steps: L-aspartate is first activated by ATP to form Asp-AMP and then transferred to the acceptor end of tRNA(Asp/Asn). This is Aspartate--tRNA(Asp/Asn) ligase from Chromohalobacter salexigens (strain ATCC BAA-138 / DSM 3043 / CIP 106854 / NCIMB 13768 / 1H11).